We begin with the raw amino-acid sequence, 138 residues long: Aspartate 1-decarboxylase (138 aa).

The active-site Schiff-base intermediate with substrate; via pyruvic acid is serine 25. Serine 25 bears the Pyruvic acid (Ser) mark. Threonine 57 lines the substrate pocket. Residue tyrosine 58 is the Proton donor of the active site. 73–75 (GAA) is a binding site for substrate. Residues 116-138 (ELGGDPAQVPDGSGLKNPRHPEA) are disordered.

It belongs to the PanD family. As to quaternary structure, heterooctamer of four alpha and four beta subunits. The cofactor is pyruvate. Is synthesized initially as an inactive proenzyme, which is activated by self-cleavage at a specific serine bond to produce a beta-subunit with a hydroxyl group at its C-terminus and an alpha-subunit with a pyruvoyl group at its N-terminus.

It localises to the cytoplasm. It catalyses the reaction L-aspartate + H(+) = beta-alanine + CO2. The protein operates within cofactor biosynthesis; (R)-pantothenate biosynthesis; beta-alanine from L-aspartate: step 1/1. Functionally, catalyzes the pyruvoyl-dependent decarboxylation of aspartate to produce beta-alanine. The polypeptide is Aspartate 1-decarboxylase (Corynebacterium jeikeium (strain K411)).